A 398-amino-acid polypeptide reads, in one-letter code: Bifunctional enzyme IspD/IspF (398 aa).

Positions 1 to 234 (MANSRRTAAI…SRLAALLGDI (234 aa)) are 2-C-methyl-D-erythritol 4-phosphate cytidylyltransferase. The 2-C-methyl-D-erythritol 2,4-cyclodiphosphate synthase stretch occupies residues 235–398 (RTGTGYDVHA…LPWGPNGLSG (164 aa)). Positions 241 and 243 each coordinate a divalent metal cation. Residues 241–243 (DVH) and 267–268 (HS) each bind 4-CDP-2-C-methyl-D-erythritol 2-phosphate. H275 lines the a divalent metal cation pocket. Residues 289-291 (DIG), 365-368 (TTSE), F372, and R375 contribute to the 4-CDP-2-C-methyl-D-erythritol 2-phosphate site.

It in the N-terminal section; belongs to the IspD/TarI cytidylyltransferase family. IspD subfamily. In the C-terminal section; belongs to the IspF family. It depends on a divalent metal cation as a cofactor.

It catalyses the reaction 2-C-methyl-D-erythritol 4-phosphate + CTP + H(+) = 4-CDP-2-C-methyl-D-erythritol + diphosphate. The enzyme catalyses 4-CDP-2-C-methyl-D-erythritol 2-phosphate = 2-C-methyl-D-erythritol 2,4-cyclic diphosphate + CMP. It functions in the pathway isoprenoid biosynthesis; isopentenyl diphosphate biosynthesis via DXP pathway; isopentenyl diphosphate from 1-deoxy-D-xylulose 5-phosphate: step 2/6. The protein operates within isoprenoid biosynthesis; isopentenyl diphosphate biosynthesis via DXP pathway; isopentenyl diphosphate from 1-deoxy-D-xylulose 5-phosphate: step 4/6. Bifunctional enzyme that catalyzes the formation of 4-diphosphocytidyl-2-C-methyl-D-erythritol from CTP and 2-C-methyl-D-erythritol 4-phosphate (MEP) (IspD), and catalyzes the conversion of 4-diphosphocytidyl-2-C-methyl-D-erythritol 2-phosphate (CDP-ME2P) to 2-C-methyl-D-erythritol 2,4-cyclodiphosphate (ME-CPP) with a corresponding release of cytidine 5-monophosphate (CMP) (IspF). The sequence is that of Bifunctional enzyme IspD/IspF from Rhodopseudomonas palustris (strain BisA53).